The sequence spans 1715 residues: Pentafunctional AROM polypeptide (1715 aa).

Positions Met-1–Pro-17 are enriched in polar residues. A disordered region spans residues Met-1–Asp-26. The segment at Met-1–Asp-421 is 3-dehydroquinate synthase. Residues Asp-71–Asn-73, Glu-112–Lys-115, Gly-143–Val-145, and Asp-148 contribute to the NAD(+) site. Position 159 (Arg-159) interacts with 7-phospho-2-dehydro-3-deoxy-D-arabino-heptonate. Residue Thr-168–Thr-169 coordinates NAD(+). 7-phospho-2-dehydro-3-deoxy-D-arabino-heptonate is bound by residues Asp-175 and Lys-181. Position 190 (Lys-190) interacts with NAD(+). Position 191 (Asn-191) interacts with 7-phospho-2-dehydro-3-deoxy-D-arabino-heptonate. Residues Trp-208–Thr-211 and Asn-219 each bind NAD(+). Residue Glu-223 participates in Zn(2+) binding. 7-phospho-2-dehydro-3-deoxy-D-arabino-heptonate is bound by residues Glu-223 to Lys-226 and Lys-287. The active-site Proton acceptor; for 3-dehydroquinate synthase activity is Glu-297. 7-phospho-2-dehydro-3-deoxy-D-arabino-heptonate is bound by residues Arg-301–Asn-305 and His-308. Residue His-308 participates in Zn(2+) binding. The Proton acceptor; for 3-dehydroquinate synthase activity role is filled by His-312. 7-phospho-2-dehydro-3-deoxy-D-arabino-heptonate is bound by residues His-324 and Lys-393. His-324 is a Zn(2+) binding site. Residues Val-434–Ile-895 are EPSP synthase. The For EPSP synthase activity role is filled by Cys-877. Residues His-948–Ser-1165 form a shikimate kinase region. Gly-955–Thr-962 contributes to the ATP binding site. A 3-dehydroquinase region spans residues Leu-1166–Gln-1389. The Proton acceptor; for 3-dehydroquinate dehydratase activity role is filled by His-1292. Residue Lys-1320 is the Schiff-base intermediate with substrate; for 3-dehydroquinate dehydratase activity of the active site. The tract at residues Ala-1402–Cys-1715 is shikimate dehydrogenase.

In the N-terminal section; belongs to the sugar phosphate cyclases superfamily. Dehydroquinate synthase family. This sequence in the 2nd section; belongs to the EPSP synthase family. The protein in the 3rd section; belongs to the shikimate kinase family. It in the 4th section; belongs to the type-I 3-dehydroquinase family. In the C-terminal section; belongs to the shikimate dehydrogenase family. In terms of assembly, homodimer. Requires Zn(2+) as cofactor.

It is found in the cytoplasm. It carries out the reaction 7-phospho-2-dehydro-3-deoxy-D-arabino-heptonate = 3-dehydroquinate + phosphate. The enzyme catalyses 3-dehydroquinate = 3-dehydroshikimate + H2O. It catalyses the reaction shikimate + NADP(+) = 3-dehydroshikimate + NADPH + H(+). The catalysed reaction is shikimate + ATP = 3-phosphoshikimate + ADP + H(+). It carries out the reaction 3-phosphoshikimate + phosphoenolpyruvate = 5-O-(1-carboxyvinyl)-3-phosphoshikimate + phosphate. It participates in metabolic intermediate biosynthesis; chorismate biosynthesis; chorismate from D-erythrose 4-phosphate and phosphoenolpyruvate: step 2/7. It functions in the pathway metabolic intermediate biosynthesis; chorismate biosynthesis; chorismate from D-erythrose 4-phosphate and phosphoenolpyruvate: step 3/7. Its pathway is metabolic intermediate biosynthesis; chorismate biosynthesis; chorismate from D-erythrose 4-phosphate and phosphoenolpyruvate: step 4/7. The protein operates within metabolic intermediate biosynthesis; chorismate biosynthesis; chorismate from D-erythrose 4-phosphate and phosphoenolpyruvate: step 5/7. It participates in metabolic intermediate biosynthesis; chorismate biosynthesis; chorismate from D-erythrose 4-phosphate and phosphoenolpyruvate: step 6/7. Functionally, the AROM polypeptide catalyzes 5 consecutive enzymatic reactions in prechorismate polyaromatic amino acid biosynthesis. In Mycosarcoma maydis (Corn smut fungus), this protein is Pentafunctional AROM polypeptide.